The primary structure comprises 351 residues: UDP-3-O-acylglucosamine N-acyltransferase (351 aa).

Histidine 257 acts as the Proton acceptor in catalysis.

The protein belongs to the transferase hexapeptide repeat family. LpxD subfamily. In terms of assembly, homotrimer.

It catalyses the reaction a UDP-3-O-[(3R)-3-hydroxyacyl]-alpha-D-glucosamine + a (3R)-hydroxyacyl-[ACP] = a UDP-2-N,3-O-bis[(3R)-3-hydroxyacyl]-alpha-D-glucosamine + holo-[ACP] + H(+). It participates in bacterial outer membrane biogenesis; LPS lipid A biosynthesis. Functionally, catalyzes the N-acylation of UDP-3-O-acylglucosamine using 3-hydroxyacyl-ACP as the acyl donor. Is involved in the biosynthesis of lipid A, a phosphorylated glycolipid that anchors the lipopolysaccharide to the outer membrane of the cell. This is UDP-3-O-acylglucosamine N-acyltransferase from Brucella abortus (strain S19).